A 410-amino-acid polypeptide reads, in one-letter code: Lysosome-associated membrane glycoprotein 2 (410 aa).

Residues 1-28 (MVCFRLFPVPGSGLVLVCLVLGAVRSYA) form the signal peptide. The first lumenal domain stretch occupies residues 29-192 (LELNLTDSEN…STNEFLCDKD (164 aa)). Topologically, residues 29–375 (LELNLTDSEN…QDCSADDDNF (347 aa)) are lumenal. Residues N32 and N38 are each glycosylated (N-linked (GlcNAc...) (polylactosaminoglycan) asparagine). The cysteines at positions 41 and 79 are disulfide-linked. N-linked (GlcNAc...) asparagine glycosylation is found at N49, N58, N75, N101, N123, and N179. C153 and C189 are joined by a disulfide. Residues 193–228 (KTSTVAPTIHTTVPSPTTTPTPKEKPEAGTYSVNNG) form a hinge region. An O-linked (GalNAc...) serine glycan is attached at S195. O-linked (GalNAc...) threonine glycosylation is found at T196, T200, T203, and T204. Over residues 199-213 (PTIHTTVPSPTTTPT) the composition is skewed to low complexity. The segment at 199-221 (PTIHTTVPSPTTTPTPKEKPEAG) is disordered. The O-linked (GalNAc...) serine; partial glycan is linked to S207. Residue T209 is glycosylated (O-linked (GalNAc...) threonine; partial). Residues T210 and T211 are each glycosylated (O-linked (GalNAc...) threonine). Residue T213 is glycosylated (O-linked (GalNAc...) threonine; partial). 5 N-linked (GlcNAc...) asparagine glycosylation sites follow: N229, N242, N257, N275, and N300. Residues 229–375 (NDTCLLATMG…QDCSADDDNF (147 aa)) form a second lumenal domain region. Cysteines 232 and 265 form a disulfide. N-linked (GlcNAc...) (polylactosaminoglycan) asparagine glycosylation is present at N307. N-linked (GlcNAc...) asparagine glycans are attached at residues N317 and N356. Residues C331 and C368 are joined by a disulfide bond. Residues 376-399 (LVPIAVGAALAGVLILVLLAYFIG) traverse the membrane as a helical segment. Topologically, residues 400–410 (LKHHHAGYEQF) are cytoplasmic. The segment at 401 to 404 (KHHH) is important for binding and subsequent lysosomal degradation of target proteins.

It belongs to the LAMP family. As to quaternary structure, monomer. Homodimer. Homotrimer. Forms large homooligomers. Interacts (via its cytoplasmic region) with HSPA8; HSPA8 mediates recruitment of proteins with a KFERQ motif to the surface of the lysosome for chaperone-mediated autophagy. Interacts with HSP90 in the lysosome lumen; this enhances LAMP2 stability. Interacts with MLLT11. Interacts with ABCB9. Interacts with FURIN. Interacts with CT55; this interaction may be important for LAMP2 protein stability. Interacts with TMEM175; inhibiting the proton channel activity of TMEM175. Forms a ternary complex with RAB7A and RUFY4 (via RUN domain); the interaction with RAB7A is mediated by RUFY4 (via RUN and coiled coil domains). In terms of assembly, (Microbial infection) Interacts with mumps virus protein F; this interaction promotes protein F cleavage by FURIN. In terms of processing, O- and N-glycosylated; some of the 16 N-linked glycans are polylactosaminoglycans. As to expression, isoform LAMP-2A is highly expressed in placenta, lung and liver, less in kidney and pancreas, low in brain and skeletal muscle. Isoform LAMP-2B is detected in spleen, thymus, prostate, testis, small intestine, colon, skeletal muscle, brain, placenta, lung, kidney, ovary and pancreas and liver. Isoform LAMP-2C is detected in small intestine, colon, heart, brain, skeletal muscle, and at lower levels in kidney and placenta.

It is found in the lysosome membrane. It localises to the endosome membrane. Its subcellular location is the cell membrane. The protein resides in the cytoplasmic vesicle. The protein localises to the autophagosome membrane. Functionally, lysosomal membrane glycoprotein which plays an important role in lysosome biogenesis, lysosomal pH regulation and autophagy. Acts as an important regulator of lysosomal lumen pH regulation by acting as a direct inhibitor of the proton channel TMEM175, facilitating lysosomal acidification for optimal hydrolase activity. Plays an important role in chaperone-mediated autophagy, a process that mediates lysosomal degradation of proteins in response to various stresses and as part of the normal turnover of proteins with a long biological half-live. Functions by binding target proteins, such as GAPDH, NLRP3 and MLLT11, and targeting them for lysosomal degradation. In the chaperone-mediated autophagy, acts downstream of chaperones, such as HSPA8/HSC70, which recognize and bind substrate proteins and mediate their recruitment to lysosomes, where target proteins bind LAMP2. Plays a role in lysosomal protein degradation in response to starvation. Required for the fusion of autophagosomes with lysosomes during autophagy. Cells that lack LAMP2 express normal levels of VAMP8, but fail to accumulate STX17 on autophagosomes, which is the most likely explanation for the lack of fusion between autophagosomes and lysosomes. Required for normal degradation of the contents of autophagosomes. Required for efficient MHC class II-mediated presentation of exogenous antigens via its function in lysosomal protein degradation; antigenic peptides generated by proteases in the endosomal/lysosomal compartment are captured by nascent MHC II subunits. Is not required for efficient MHC class II-mediated presentation of endogenous antigens. Its function is as follows. Modulates chaperone-mediated autophagy. Decreases presentation of endogenous antigens by MHCII. Does not play a role in the presentation of exogenous and membrane-derived antigens by MHCII. (Microbial infection) Supports the FURIN-mediated cleavage of mumps virus fusion protein F by interacting with both FURIN and the unprocessed form but not the processed form of the viral protein F. This Homo sapiens (Human) protein is Lysosome-associated membrane glycoprotein 2 (LAMP2).